The primary structure comprises 129 residues: Cytochrome c oxidase subunit 5B, mitochondrial (129 aa).

The transit peptide at 1 to 31 (MASRLLRGAGALAAQTLRARGPNGVAVVRSM) directs the protein to the mitochondrion. An N6-acetyllysine mark is found at K68 and K86. 4 residues coordinate Zn(2+): C91, C93, C113, and C116. The residue at position 121 (K121) is an N6-acetyllysine.

Belongs to the cytochrome c oxidase subunit 5B family. In terms of assembly, component of the cytochrome c oxidase (complex IV, CIV), a multisubunit enzyme composed of 14 subunits. The complex is composed of a catalytic core of 3 subunits MT-CO1, MT-CO2 and MT-CO3, encoded in the mitochondrial DNA, and 11 supernumerary subunits COX4I, COX5A, COX5B, COX6A, COX6B, COX6C, COX7A, COX7B, COX7C, COX8 and NDUFA4, which are encoded in the nuclear genome. The complex exists as a monomer or a dimer and forms supercomplexes (SCs) in the inner mitochondrial membrane with NADH-ubiquinone oxidoreductase (complex I, CI) and ubiquinol-cytochrome c oxidoreductase (cytochrome b-c1 complex, complex III, CIII), resulting in different assemblies (supercomplex SCI(1)III(2)IV(1) and megacomplex MCI(2)III(2)IV(2)).

It is found in the mitochondrion inner membrane. The protein operates within energy metabolism; oxidative phosphorylation. Component of the cytochrome c oxidase, the last enzyme in the mitochondrial electron transport chain which drives oxidative phosphorylation. The respiratory chain contains 3 multisubunit complexes succinate dehydrogenase (complex II, CII), ubiquinol-cytochrome c oxidoreductase (cytochrome b-c1 complex, complex III, CIII) and cytochrome c oxidase (complex IV, CIV), that cooperate to transfer electrons derived from NADH and succinate to molecular oxygen, creating an electrochemical gradient over the inner membrane that drives transmembrane transport and the ATP synthase. Cytochrome c oxidase is the component of the respiratory chain that catalyzes the reduction of oxygen to water. Electrons originating from reduced cytochrome c in the intermembrane space (IMS) are transferred via the dinuclear copper A center (CU(A)) of subunit 2 and heme A of subunit 1 to the active site in subunit 1, a binuclear center (BNC) formed by heme A3 and copper B (CU(B)). The BNC reduces molecular oxygen to 2 water molecules using 4 electrons from cytochrome c in the IMS and 4 protons from the mitochondrial matrix. This chain is Cytochrome c oxidase subunit 5B, mitochondrial (COX5B), found in Sus scrofa (Pig).